The following is a 327-amino-acid chain: Ferredoxin--NADP reductase (327 aa).

Threonine 18, aspartate 37, glutamine 45, tyrosine 50, alanine 90, phenylalanine 124, aspartate 283, and serine 324 together coordinate FAD.

Belongs to the ferredoxin--NADP reductase type 2 family. As to quaternary structure, homodimer. FAD serves as cofactor.

The catalysed reaction is 2 reduced [2Fe-2S]-[ferredoxin] + NADP(+) + H(+) = 2 oxidized [2Fe-2S]-[ferredoxin] + NADPH. This chain is Ferredoxin--NADP reductase, found in Saccharopolyspora erythraea (strain ATCC 11635 / DSM 40517 / JCM 4748 / NBRC 13426 / NCIMB 8594 / NRRL 2338).